Reading from the N-terminus, the 339-residue chain is DNA-directed RNA polymerase subunit alpha (339 aa).

The alpha N-terminal domain (alpha-NTD) stretch occupies residues 1 to 233; it reads MVREEVAGST…DLFLPFLHAE (233 aa). An alpha C-terminal domain (alpha-CTD) region spans residues 264-339; the sequence is KKGIPLNCIF…IDLLKNKLSF (76 aa).

This sequence belongs to the RNA polymerase alpha chain family. As to quaternary structure, in plastids the minimal PEP RNA polymerase catalytic core is composed of four subunits: alpha, beta, beta', and beta''. When a (nuclear-encoded) sigma factor is associated with the core the holoenzyme is formed, which can initiate transcription.

The protein resides in the plastid. It is found in the chloroplast. The catalysed reaction is RNA(n) + a ribonucleoside 5'-triphosphate = RNA(n+1) + diphosphate. In terms of biological role, DNA-dependent RNA polymerase catalyzes the transcription of DNA into RNA using the four ribonucleoside triphosphates as substrates. In Festucopsis festucoides, this protein is DNA-directed RNA polymerase subunit alpha.